The following is a 407-amino-acid chain: Transcriptional regulator ICP22 homolog (407 aa).

The tract at residues 34–268 (RKRRRKLKPQ…STQPGGVPKL (235 aa)) is disordered. Acidic residues predominate over residues 81 to 241 (EREGEGGEEG…EEAEEEEEEA (161 aa)).

Belongs to the herpesviridae ICP22 family.

The sequence is that of Transcriptional regulator ICP22 homolog (73) from Saimiriine herpesvirus 2 (strain 11) (SaHV-2).